The sequence spans 458 residues: tRNA modification GTPase MnmE (458 aa).

Residues R26, E88, and R127 each contribute to the (6S)-5-formyl-5,6,7,8-tetrahydrofolate site. The TrmE-type G domain occupies 224–378 (GLSTAIIGRP…IEERINDIFF (155 aa)). N234 is a binding site for K(+). GTP is bound by residues 234 to 239 (NVGKSS), 253 to 259 (TDIEGTT), and 278 to 281 (DTAG). S238 serves as a coordination point for Mg(2+). K(+) is bound by residues T253, I255, and T258. Residue T259 coordinates Mg(2+). Residue K458 coordinates (6S)-5-formyl-5,6,7,8-tetrahydrofolate.

This sequence belongs to the TRAFAC class TrmE-Era-EngA-EngB-Septin-like GTPase superfamily. TrmE GTPase family. As to quaternary structure, homodimer. Heterotetramer of two MnmE and two MnmG subunits. K(+) serves as cofactor.

It is found in the cytoplasm. In terms of biological role, exhibits a very high intrinsic GTPase hydrolysis rate. Involved in the addition of a carboxymethylaminomethyl (cmnm) group at the wobble position (U34) of certain tRNAs, forming tRNA-cmnm(5)s(2)U34. This is tRNA modification GTPase MnmE from Streptococcus agalactiae serotype Ia (strain ATCC 27591 / A909 / CDC SS700).